Here is a 276-residue protein sequence, read N- to C-terminus: MSARWTTAVLDPQMTGGLAVARSPEGFLVDANGALFPRDWLKRQDLDVLCEHGIGHFDGQPVFLLELRSATDVPGCSWRGLRAFMLEGDFDTYKVLGYAAQIGTWAREHRFCGSCGQPMTQIRWERAMYCQPCDLRSYPRISPSMIVLVTRGDEILLARSPRFVTGVYSTLAGFAEPGESAEDCLVREVREEVAVEVKNIQYVGSQCWPFPHSMMLGFHAEYAGGEIVMQPDEIEDAKWFSVHDLPPLPAGRSIARYLIDLYVARRLGCDIPAFPS.

Arg-82 contributes to the substrate binding site. The Zn(2+) site is built by Cys-112 and Cys-115. Glu-125 contributes to the substrate binding site. Cys-130 and Cys-133 together coordinate Zn(2+). Residue Tyr-138 participates in substrate binding. Residues Pro-139–Tyr-262 enclose the Nudix hydrolase domain. A divalent metal cation is bound by residues Ala-172, Glu-188, and Glu-192. Positions Gly-173–Ala-194 match the Nudix box motif. Residue Gln-206–Ser-213 participates in substrate binding. A divalent metal cation is bound at residue Glu-233. Residue Ala-255 participates in substrate binding.

The protein belongs to the Nudix hydrolase family. NudC subfamily. In terms of assembly, homodimer. The cofactor is Mg(2+). Mn(2+) serves as cofactor. It depends on Zn(2+) as a cofactor.

It catalyses the reaction a 5'-end NAD(+)-phospho-ribonucleoside in mRNA + H2O = a 5'-end phospho-adenosine-phospho-ribonucleoside in mRNA + beta-nicotinamide D-ribonucleotide + 2 H(+). The enzyme catalyses NAD(+) + H2O = beta-nicotinamide D-ribonucleotide + AMP + 2 H(+). It carries out the reaction NADH + H2O = reduced beta-nicotinamide D-ribonucleotide + AMP + 2 H(+). In terms of biological role, mRNA decapping enzyme that specifically removes the nicotinamide adenine dinucleotide (NAD) cap from a subset of mRNAs by hydrolyzing the diphosphate linkage to produce nicotinamide mononucleotide (NMN) and 5' monophosphate mRNA. The NAD-cap is present at the 5'-end of some mRNAs and stabilizes RNA against 5'-processing. Has preference for mRNAs with a 5'-end purine. Catalyzes the hydrolysis of a broad range of dinucleotide pyrophosphates. This is NAD-capped RNA hydrolase NudC from Pseudomonas putida (strain ATCC 47054 / DSM 6125 / CFBP 8728 / NCIMB 11950 / KT2440).